The sequence spans 582 residues: La-related protein 7 (582 aa).

Met-1 is subject to N-acetylmethionine. Residues 1 to 27 (METESGNQEKVMEEESTEKKKEVEKKK) are disordered. Residues 10 to 25 (KVMEEESTEKKKEVEK) are compositionally biased toward basic and acidic residues. In terms of domain architecture, HTH La-type RNA-binding spans 28–122 (RSRVKQVLAD…KPLGERPKDE (95 aa)). Residues 125 to 203 (RTVYVELLPK…PRKPGIFPKT (79 aa)) enclose the RRM domain. Disordered regions lie at residues 188–368 (NPPE…ERHK) and 410–442 (KSES…RTQE). Residues 219–228 (KKKKKKKGRM) are compositionally biased toward basic residues. Positions 229–240 (KKEDNIQAKEEN) are enriched in basic and acidic residues. Lys-237 participates in a covalent cross-link: Glycyl lysine isopeptide (Lys-Gly) (interchain with G-Cter in SUMO2). Thr-257 is subject to Phosphothreonine. Phosphoserine occurs at positions 258, 261, 273, 298, 299, and 300. Positions 316–335 (IQKDIIKEASEASKENRDIE) are enriched in basic and acidic residues. Ser-337 is modified (phosphoserine). Thr-338 is subject to Phosphothreonine. Ser-351 carries the post-translational modification Phosphoserine. Residues 354-367 (KTKRKHKKKHKERH) are compositionally biased toward basic residues. Residue Lys-410 forms a Glycyl lysine isopeptide (Lys-Gly) (interchain with G-Cter in SUMO2) linkage. Over residues 428–442 (KNEKTANREECRTQE) the composition is skewed to basic and acidic residues. Residues 450–563 (QFVSGVIVKI…TEKLITKAEK (114 aa)) enclose the xRRM domain.

It belongs to the LARP7 family. In terms of assembly, core component of the 7SK RNP complex, at least composed of 7SK RNA, LARP7, MEPCE, HEXIM1 (or HEXIM2) and P-TEFb (composed of CDK9 and CCNT1/cyclin-T1). Interacts with METTL16. Interacts with RBM7; upon genotoxic stress this interaction is enhanced, triggering the release of inactive P-TEFb complex from the core, yielding to P-TEFb complex activation. Associates with box C/D small nucleolar ribonucleoprotein (snoRNP) complexes.

Its subcellular location is the nucleus. The protein resides in the nucleoplasm. Functionally, RNA-binding protein that specifically binds distinct small nuclear RNA (snRNAs) and regulates their processing and function. Specifically binds the 7SK snRNA (7SK RNA) and acts as a core component of the 7SK ribonucleoprotein (RNP) complex, thereby acting as a negative regulator of transcription elongation by RNA polymerase II. The 7SK RNP complex sequesters the positive transcription elongation factor b (P-TEFb) in a large inactive 7SK RNP complex preventing RNA polymerase II phosphorylation and subsequent transcriptional elongation. The 7SK RNP complex also promotes snRNA gene transcription by RNA polymerase II via interaction with the little elongation complex (LEC). LARP7 specifically binds to the highly conserved 3'-terminal U-rich stretch of 7SK RNA; on stimulation, remains associated with 7SK RNA, whereas P-TEFb is released from the complex. LARP7 also acts as a regulator of mRNA splicing fidelity by promoting U6 snRNA processing. Specifically binds U6 snRNAs and associates with a subset of box C/D RNP complexes: promotes U6 snRNA 2'-O-methylation by facilitating U6 snRNA loading into box C/D RNP complexes. U6 snRNA 2'-O-methylation is required for mRNA splicing fidelity. Binds U6 snRNAs with a 5'-CAGGG-3' sequence motif. U6 snRNA processing is required for spermatogenesis. The protein is La-related protein 7 of Homo sapiens (Human).